The primary structure comprises 474 residues: tRNA-2-methylthio-N(6)-dimethylallyladenosine synthase (474 aa).

One can recognise an MTTase N-terminal domain in the interval 3–120 (KKLHIKTWGC…LPEMINQVKG (118 aa)). The [4Fe-4S] cluster site is built by cysteine 12, cysteine 49, cysteine 83, cysteine 157, cysteine 161, and cysteine 164. The region spanning 143–375 (RAEGPTAFVS…QERINQQAMA (233 aa)) is the Radical SAM core domain. Residues 378 to 441 (RRMLGTTQRI…PNSLRGKVIR (64 aa)) form the TRAM domain.

It belongs to the methylthiotransferase family. MiaB subfamily. In terms of assembly, monomer. [4Fe-4S] cluster serves as cofactor.

The protein localises to the cytoplasm. The catalysed reaction is N(6)-dimethylallyladenosine(37) in tRNA + (sulfur carrier)-SH + AH2 + 2 S-adenosyl-L-methionine = 2-methylsulfanyl-N(6)-dimethylallyladenosine(37) in tRNA + (sulfur carrier)-H + 5'-deoxyadenosine + L-methionine + A + S-adenosyl-L-homocysteine + 2 H(+). In terms of biological role, catalyzes the methylthiolation of N6-(dimethylallyl)adenosine (i(6)A), leading to the formation of 2-methylthio-N6-(dimethylallyl)adenosine (ms(2)i(6)A) at position 37 in tRNAs that read codons beginning with uridine. The sequence is that of tRNA-2-methylthio-N(6)-dimethylallyladenosine synthase from Cronobacter sakazakii (strain ATCC BAA-894) (Enterobacter sakazakii).